A 419-amino-acid chain; its full sequence is Synaptotagmin-1 (419 aa).

Residues 1–58 (MVSESHHEALAAPPVTTVATVLPSNATEPASPGEGKEDAFSKLKEKFMNELHKIPLPP) are Vesicular-facing. Residue asparagine 25 is glycosylated (N-linked (GlcNAc...) asparagine). A helical membrane pass occupies residues 59–80 (WALIAIAIVAVLLVLTCCFCIC). Residues cysteine 75, cysteine 76, cysteine 78, cysteine 80, and cysteine 83 are each lipidated (S-palmitoyl cysteine). The Cytoplasmic segment spans residues 81–419 (KKCLFKKKNK…EVDAMLAVKK (339 aa)). Residues 108-139 (KDLGKTMKDQDDDAETGLTDGEEKEEPKEEEK) form a disordered region. Over residues 117–131 (QDDDAETGLTDGEEK) the composition is skewed to acidic residues. Threonine 126 carries the post-translational modification Phosphothreonine. A phospholipid binding region spans residues 133-379 (EPKEEEKLGK…AIGKVFVGYN (247 aa)). One can recognise a C2 1 domain in the interval 139 to 258 (KLGKLQYSLD…DFGHVTEEWR (120 aa)). Leucine 169, aspartate 170, and aspartate 176 together coordinate Ca(2+). The residue at position 227 (tyrosine 227) is a Phosphotyrosine. Residues aspartate 228, phenylalanine 229, aspartate 230, serine 233, lysine 234, and aspartate 236 each contribute to the Ca(2+) site. Position 262 is a phosphoserine (serine 262). The C2 2 domain occupies 270–403 (KLGDICFSLR…NPRRPIAQWH (134 aa)). Ca(2+)-binding residues include aspartate 301 and aspartate 307. Residues serine 340 and serine 342 each carry the phosphoserine modification. Aspartate 361, aspartate 363, and aspartate 369 together coordinate Ca(2+).

The protein belongs to the synaptotagmin family. As to quaternary structure, homotetramer. Heterodimer; heterodimerizes with SYT2 in presence of calcium. Interacts with SCAMP5. Interacts with STON2. Forms a complex with SV2B, syntaxin 1 and SNAP25. Interacts with SV2A, SV2B and SV2C. Interacts with RIMS1. Interacts with PRRT2. Interacts with DNAJC5 in a phosphorylation-dependent manner. Interacts (via N-terminus) with RAB3A. Interacts with SYT12. Interacts with calmodulin. Interacts with DNM1 (via C-terminal proline-rich domain (PRD)); this interaction facilitates vesicle fission during clathrin-mediated endocytosis (CME). Ca(2+) serves as cofactor. Glycosylated.

It localises to the cytoplasmic vesicle. Its subcellular location is the secretory vesicle membrane. It is found in the secretory vesicle. The protein localises to the synaptic vesicle membrane. The protein resides in the chromaffin granule membrane. It localises to the cytoplasm. Functionally, calcium sensor that participates in triggering neurotransmitter release at the synapse. May have a regulatory role in the membrane interactions during trafficking of synaptic vesicles at the active zone of the synapse. It binds acidic phospholipids with a specificity that requires the presence of both an acidic head group and a diacyl backbone. A Ca(2+)-dependent interaction between synaptotagmin and putative receptors for activated protein kinase C has also been reported. It can bind to at least three additional proteins in a Ca(2+)-independent manner; these are neurexins, syntaxin and AP2. Plays a role in dendrite formation by melanocytes. This chain is Synaptotagmin-1, found in Pongo abelii (Sumatran orangutan).